A 244-amino-acid chain; its full sequence is Small ribosomal subunit protein uS2 (244 aa).

The protein belongs to the universal ribosomal protein uS2 family.

The polypeptide is Small ribosomal subunit protein uS2 (Desulforudis audaxviator (strain MP104C)).